The primary structure comprises 130 residues: Vascular-related unknown protein 3 (130 aa).

The interval D45 to N81 is disordered.

Involved in the regulation of plant growth. The chain is Vascular-related unknown protein 3 from Arabidopsis thaliana (Mouse-ear cress).